Here is an 83-residue protein sequence, read N- to C-terminus: Ferredoxin (83 aa).

4Fe-4S ferredoxin-type domains follow at residues 2–29 (ALMI…QGDE) and 31–64 (YVIE…KDPS). Residues C9, C12, C15, C19, C38, C41, C50, and C54 each contribute to the [4Fe-4S] cluster site.

It depends on [4Fe-4S] cluster as a cofactor.

Its function is as follows. Ferredoxins are iron-sulfur proteins that transfer electrons in a wide variety of metabolic reactions. The protein is Ferredoxin (fdx) of Allochromatium vinosum (strain ATCC 17899 / DSM 180 / NBRC 103801 / NCIMB 10441 / D) (Chromatium vinosum).